The chain runs to 365 residues: Chaperone protein DnaJ (365 aa).

One can recognise a J domain in the interval 4 to 70; it reads DYYKILGVDR…EKRRIYDQTG (67 aa). The CR-type zinc finger occupies 139-220; sequence GTEKRIKFRR…CNGTGTIVVD (82 aa). Positions 152, 155, 168, 171, 194, 197, 208, and 211 each coordinate Zn(2+). CXXCXGXG motif repeat units follow at residues 152–159, 168–175, 194–201, and 208–215; these read CPDCKGTG, CPTCHGTG, CNTCGGKG, and CPRCNGTG.

This sequence belongs to the DnaJ family. As to quaternary structure, homodimer. Requires Zn(2+) as cofactor.

It is found in the cytoplasm. Participates actively in the response to hyperosmotic and heat shock by preventing the aggregation of stress-denatured proteins and by disaggregating proteins, also in an autonomous, DnaK-independent fashion. Unfolded proteins bind initially to DnaJ; upon interaction with the DnaJ-bound protein, DnaK hydrolyzes its bound ATP, resulting in the formation of a stable complex. GrpE releases ADP from DnaK; ATP binding to DnaK triggers the release of the substrate protein, thus completing the reaction cycle. Several rounds of ATP-dependent interactions between DnaJ, DnaK and GrpE are required for fully efficient folding. Also involved, together with DnaK and GrpE, in the DNA replication of plasmids through activation of initiation proteins. This chain is Chaperone protein DnaJ, found in Thermoplasma volcanium (strain ATCC 51530 / DSM 4299 / JCM 9571 / NBRC 15438 / GSS1).